The primary structure comprises 233 residues: ATP-dependent dethiobiotin synthetase BioD (233 aa).

12–17 contributes to the ATP binding site; that stretch reads GVGKTI. Position 16 (Thr16) interacts with Mg(2+). Lys37 is an active-site residue. Ser41 is a substrate binding site. ATP is bound by residues Asp51, 112-115, and 202-204; these read EGAG and PKL. Residues Asp51 and Glu112 each coordinate Mg(2+).

It belongs to the dethiobiotin synthetase family. In terms of assembly, homodimer. Mg(2+) serves as cofactor.

It is found in the cytoplasm. It carries out the reaction (7R,8S)-7,8-diammoniononanoate + CO2 + ATP = (4R,5S)-dethiobiotin + ADP + phosphate + 3 H(+). The protein operates within cofactor biosynthesis; biotin biosynthesis; biotin from 7,8-diaminononanoate: step 1/2. Functionally, catalyzes a mechanistically unusual reaction, the ATP-dependent insertion of CO2 between the N7 and N8 nitrogen atoms of 7,8-diaminopelargonic acid (DAPA, also called 7,8-diammoniononanoate) to form a ureido ring. In Bacillus velezensis (strain DSM 23117 / BGSC 10A6 / LMG 26770 / FZB42) (Bacillus amyloliquefaciens subsp. plantarum), this protein is ATP-dependent dethiobiotin synthetase BioD.